The primary structure comprises 467 residues: A-type ATP synthase subunit B (467 aa).

Residues 95-114 form a disordered region; that stretch reads GKGQPRDHMPLPPPEDFRDV.

The protein belongs to the ATPase alpha/beta chains family. As to quaternary structure, has multiple subunits with at least A(3), B(3), C, D, E, F, H, I and proteolipid K(x).

The protein resides in the cell membrane. In terms of biological role, component of the A-type ATP synthase that produces ATP from ADP in the presence of a proton gradient across the membrane. The B chain is a regulatory subunit. The sequence is that of A-type ATP synthase subunit B from Pyrobaculum neutrophilum (strain DSM 2338 / JCM 9278 / NBRC 100436 / V24Sta) (Thermoproteus neutrophilus).